The primary structure comprises 419 residues: Tol-Pal system protein TolB (419 aa).

An N-terminal signal peptide occupies residues 1-19 (MCNRIISLFLLLFTGQVIA).

Belongs to the TolB family. In terms of assembly, the Tol-Pal system is composed of five core proteins: the inner membrane proteins TolA, TolQ and TolR, the periplasmic protein TolB and the outer membrane protein Pal. They form a network linking the inner and outer membranes and the peptidoglycan layer.

Its subcellular location is the periplasm. Part of the Tol-Pal system, which plays a role in outer membrane invagination during cell division and is important for maintaining outer membrane integrity. The chain is Tol-Pal system protein TolB from Legionella pneumophila (strain Paris).